We begin with the raw amino-acid sequence, 351 residues long: Thiamine-phosphate synthase (351 aa).

A unknown region spans residues 1–127; the sequence is MQNLAPASEG…SETAKALRYR (127 aa). The interval 64–84 is disordered; sequence RAARQTDQDPGTALSHPQERD. The segment at 128 to 351 is thiamine-phosphate synthase; it reads VYILEQALTL…LRRLSQGEPS (224 aa). Residues 178 to 182 and Asn210 contribute to the 4-amino-2-methyl-5-(diphosphooxymethyl)pyrimidine site; that span reads QYRDK. 2 residues coordinate Mg(2+): Asp211 and Asp230. Position 249 (Ser249) interacts with 4-amino-2-methyl-5-(diphosphooxymethyl)pyrimidine. Position 275–277 (275–277) interacts with 2-[(2R,5Z)-2-carboxy-4-methylthiazol-5(2H)-ylidene]ethyl phosphate; that stretch reads TPT. Lys278 lines the 4-amino-2-methyl-5-(diphosphooxymethyl)pyrimidine pocket. Gly305 serves as a coordination point for 2-[(2R,5Z)-2-carboxy-4-methylthiazol-5(2H)-ylidene]ethyl phosphate.

Belongs to the thiamine-phosphate synthase family. It depends on Mg(2+) as a cofactor.

It carries out the reaction 2-[(2R,5Z)-2-carboxy-4-methylthiazol-5(2H)-ylidene]ethyl phosphate + 4-amino-2-methyl-5-(diphosphooxymethyl)pyrimidine + 2 H(+) = thiamine phosphate + CO2 + diphosphate. The catalysed reaction is 2-(2-carboxy-4-methylthiazol-5-yl)ethyl phosphate + 4-amino-2-methyl-5-(diphosphooxymethyl)pyrimidine + 2 H(+) = thiamine phosphate + CO2 + diphosphate. It catalyses the reaction 4-methyl-5-(2-phosphooxyethyl)-thiazole + 4-amino-2-methyl-5-(diphosphooxymethyl)pyrimidine + H(+) = thiamine phosphate + diphosphate. Its pathway is cofactor biosynthesis; thiamine diphosphate biosynthesis; thiamine phosphate from 4-amino-2-methyl-5-diphosphomethylpyrimidine and 4-methyl-5-(2-phosphoethyl)-thiazole: step 1/1. Condenses 4-methyl-5-(beta-hydroxyethyl)thiazole monophosphate (THZ-P) and 2-methyl-4-amino-5-hydroxymethyl pyrimidine pyrophosphate (HMP-PP) to form thiamine monophosphate (TMP). This chain is Thiamine-phosphate synthase, found in Thermosynechococcus vestitus (strain NIES-2133 / IAM M-273 / BP-1).